The primary structure comprises 71 residues: Delta-actitoxin-Avd2b 2 (71 aa).

The first 20 residues, 1–20 (MNRLLVFLMLGAAFMLVVSA), serve as a signal peptide directing secretion. The propeptide occupies 21–41 (NDAYGDEPAFKDLNQGDESLG). 3 disulfides stabilise this stretch: Cys46–Cys61, Cys47–Cys55, and Cys49–Cys66.

This sequence belongs to the sea anemone short toxin (type III) family.

The protein resides in the secreted. It is found in the nematocyst. Its function is as follows. Voltage-gated sodium channel (Nav) inhibitor. 1 uM completely inhibits insect voltage-gated sodium channel inactivation (DmNav1 from D.melanogaster). The sequence is that of Delta-actitoxin-Avd2b 2 from Anemonia viridis (Snakelocks anemone).